Here is a 515-residue protein sequence, read N- to C-terminus: Probable cytosol aminopeptidase (515 aa).

Residues lysine 277 and aspartate 282 each contribute to the Mn(2+) site. Residue lysine 289 is part of the active site. Mn(2+) is bound by residues aspartate 300, aspartate 359, and glutamate 361. The active site involves arginine 363.

The protein belongs to the peptidase M17 family. It depends on Mn(2+) as a cofactor.

Its subcellular location is the cytoplasm. It catalyses the reaction Release of an N-terminal amino acid, Xaa-|-Yaa-, in which Xaa is preferably Leu, but may be other amino acids including Pro although not Arg or Lys, and Yaa may be Pro. Amino acid amides and methyl esters are also readily hydrolyzed, but rates on arylamides are exceedingly low.. The catalysed reaction is Release of an N-terminal amino acid, preferentially leucine, but not glutamic or aspartic acids.. In terms of biological role, presumably involved in the processing and regular turnover of intracellular proteins. Catalyzes the removal of unsubstituted N-terminal amino acids from various peptides. The polypeptide is Probable cytosol aminopeptidase (Streptomyces griseus subsp. griseus (strain JCM 4626 / CBS 651.72 / NBRC 13350 / KCC S-0626 / ISP 5235)).